Here is a 164-residue protein sequence, read N- to C-terminus: Bacterial microcompartment shell protein EutK (164 aa).

Residues 4-88 (ALGLLEVDGM…PEEDTQWLIG (85 aa)) enclose the BMC domain. Residues 108–164 (EFAEALLALLASVRQGMTAGEVAAHFGWPLEQARNVLEQLFSDGALRKRSSRYRIKN) enclose the EutK-Ctail domain.

The protein belongs to the bacterial microcompartments protein family. In terms of assembly, monomeric in solution.

The protein resides in the bacterial microcompartment. It functions in the pathway amine and polyamine degradation; ethanolamine degradation. A component of the bacterial microcompartment (BMC) shell dedicated to ethanolamine degradation. Expression of eutK, eutL, eutM, eutN, eutS (eutSMNLK) in E.coli leads to formation of a single BMC. Coexpression of eutQ with eutSMNLK permits E.coli to make cells with more than one mobile BMC, as is usual in vivo. Its function is as follows. The ethanolamine (EA) catabolic bacterial microcompartment (BMC) probably concentrates low levels of ethanolamine catabolic enzymes, concentrates volatile reaction intermediates, keeps the level of toxic acetaldehyde low, generates enough acetyl-CoA to support cell growth, and maintains a pool of free coenzyme A (CoA) and NAD. Deletion of BMC genes (eutK, eutL, eutM) restores growth of eutD deletions, suggesting there are dedicated pools of coenzyme A (CoA) and NAD in the BMC. Functionally, expression of the eut operon allows this bacteria to use ethanolamine as a carbon, nitrogen and energy source. It relies on cobalamin (vitamin B12) both as a cofactor for the ethanolamine ammonia-lyase (EAL) activity and to induce the operon. EA enhances bacterial survival in macrophages in a concentration-dependent manner, suggesting it is an important nutrient during infection. The chain is Bacterial microcompartment shell protein EutK (eutK) from Salmonella typhimurium (strain LT2 / SGSC1412 / ATCC 700720).